The sequence spans 155 residues: Chaperone protein IpgC (155 aa).

It belongs to the LcrH/SycD chaperone family.

It is found in the cytoplasm. In terms of biological role, assists the correct folding of nascent IpaB. Once it is bound to IpaB, it binds to IpaC and impedes their premature association that would lead to their degradation in the absence of IpcG. This is Chaperone protein IpgC (ipgC) from Shigella dysenteriae.